We begin with the raw amino-acid sequence, 920 residues long: Isoleucine--tRNA ligase (920 aa).

The 'HIGH' region signature appears at 58 to 68; that stretch reads PYANGHLHLGH. Glu569 lines the L-isoleucyl-5'-AMP pocket. The 'KMSKS' region signature appears at 610-614; it reads KMSKS. Lys613 contributes to the ATP binding site. Residues Cys895, Cys898, Cys910, and Cys913 each coordinate Zn(2+).

It belongs to the class-I aminoacyl-tRNA synthetase family. IleS type 1 subfamily. Monomer. Zn(2+) is required as a cofactor.

Its subcellular location is the cytoplasm. It catalyses the reaction tRNA(Ile) + L-isoleucine + ATP = L-isoleucyl-tRNA(Ile) + AMP + diphosphate. Catalyzes the attachment of isoleucine to tRNA(Ile). As IleRS can inadvertently accommodate and process structurally similar amino acids such as valine, to avoid such errors it has two additional distinct tRNA(Ile)-dependent editing activities. One activity is designated as 'pretransfer' editing and involves the hydrolysis of activated Val-AMP. The other activity is designated 'posttransfer' editing and involves deacylation of mischarged Val-tRNA(Ile). This is Isoleucine--tRNA ligase from Helicobacter pylori (strain ATCC 700392 / 26695) (Campylobacter pylori).